Consider the following 80-residue polypeptide: ATP synthase F(1) complex subunit delta, mitochondrial (80 aa).

Residues 1–22 constitute a mitochondrion transit peptide; it reads MLPATLLRXSGLGRVVRQARAY.

The protein belongs to the ATPase epsilon chain family. As to quaternary structure, component of the ATP synthase complex composed at least of ATP5F1A/subunit alpha, ATP5F1B/subunit beta, ATP5MC1/subunit c (homooctomer), MT-ATP6/subunit a, MT-ATP8/subunit 8, ATP5ME/subunit e, ATP5MF/subunit f, ATP5MG/subunit g, ATP5MK/subunit k, ATP5MJ/subunit j, ATP5F1C/subunit gamma, ATP5F1D/subunit delta, ATP5F1E/subunit epsilon, ATP5PF/subunit F6, ATP5PB/subunit b, ATP5PD/subunit d, ATP5PO/subunit OSCP. ATP synthase complex consists of a soluble F(1) head domain (subunits alpha(3) and beta(3)) - the catalytic core - and a membrane F(0) domain - the membrane proton channel (subunits c, a, 8, e, f, g, k and j). These two domains are linked by a central stalk (subunits gamma, delta, and epsilon) rotating inside the F1 region and a stationary peripheral stalk (subunits F6, b, d, and OSCP). Component of a complex composed at least by ATPIF1, ATP5F1A, ATP5F1B, ATP5F1C AND ATP5F1E.

It is found in the mitochondrion. It localises to the mitochondrion inner membrane. Its function is as follows. Subunit delta, of the mitochondrial membrane ATP synthase complex (F(1)F(0) ATP synthase or Complex V) that produces ATP from ADP in the presence of a proton gradient across the membrane which is generated by electron transport complexes of the respiratory chain. ATP synthase complex consist of a soluble F(1) head domain - the catalytic core - and a membrane F(1) domain - the membrane proton channel. These two domains are linked by a central stalk rotating inside the F(1) region and a stationary peripheral stalk. During catalysis, ATP synthesis in the catalytic domain of F(1) is coupled via a rotary mechanism of the central stalk subunits to proton translocation. In vivo, can only synthesize ATP although its ATP hydrolase activity can be activated artificially in vitro. With the central stalk subunit gamma, is essential for the biogenesis of F(1) catalytic part of the ATP synthase complex namely in the formation of F1 assembly intermediate. This Sus scrofa (Pig) protein is ATP synthase F(1) complex subunit delta, mitochondrial.